Here is a 573-residue protein sequence, read N- to C-terminus: Adenine deaminase 2 (573 aa).

The protein belongs to the metallo-dependent hydrolases superfamily. Adenine deaminase family. Mn(2+) serves as cofactor.

It catalyses the reaction adenine + H2O + H(+) = hypoxanthine + NH4(+). This Shouchella clausii (strain KSM-K16) (Alkalihalobacillus clausii) protein is Adenine deaminase 2.